The primary structure comprises 118 residues: Small ribosomal subunit protein uS13 (118 aa).

Residues 94 to 118 (GLPVRGQRTKTNARTRKGPRKPIKK) form a disordered region.

This sequence belongs to the universal ribosomal protein uS13 family. In terms of assembly, part of the 30S ribosomal subunit. Forms a loose heterodimer with protein S19. Forms two bridges to the 50S subunit in the 70S ribosome.

In terms of biological role, located at the top of the head of the 30S subunit, it contacts several helices of the 16S rRNA. In the 70S ribosome it contacts the 23S rRNA (bridge B1a) and protein L5 of the 50S subunit (bridge B1b), connecting the 2 subunits; these bridges are implicated in subunit movement. Contacts the tRNAs in the A and P-sites. This is Small ribosomal subunit protein uS13 from Mannheimia succiniciproducens (strain KCTC 0769BP / MBEL55E).